A 218-amino-acid polypeptide reads, in one-letter code: uncharacterized protein (218 aa).

The tract at residues 1 to 67 is disordered; it reads MARITNMGKR…KKKRSEYRRL (67 aa). Positions 29 to 39 are enriched in low complexity; it reads NSSNTNEESSS. Polar residues predominate over residues 40-49; the sequence is QDNMKASFGS. Residues 58-67 are compositionally biased toward basic residues; the sequence is KKKRSEYRRL. 3 consecutive CCHC-type zinc fingers follow at residues 77-94, 100-117, and 124-141; these read KFCFACRQQGHIVQDCPE, SICFRCGSKEHSLNACSK, and AKCFICHENGHLSGQCEQ. The CCHC-type 4; atypical zinc finger occupies 152 to 168; that stretch reads CCKFCSSVHHLAKDCDQ.

This is an uncharacterized protein from Schizosaccharomyces pombe (strain 972 / ATCC 24843) (Fission yeast).